Consider the following 371-residue polypeptide: uncharacterized protein (371 aa).

8 helical membrane-spanning segments follow: residues 4 to 24 (LPMLWFFFCVTVLIIGYFIYG), 60 to 82 (LIQLLNIAGTGPIFGPILGALYG), 87 to 109 (LWIVIGCIFAGAVHDYFCGMLSI), 130 to 150 (VFINTLALVLLLLVGVVFVAS), 197 to 217 (VVAVWTAIIFAYYILATLLPV), 224 to 244 (IYPLFGALLLFMSVGMVYGLV), 282 to 302 (VPIWPLLFLTISCGALSGFHA), and 320 to 340 (FIFYGAMITEGVIALVWCMVG).

It belongs to the peptide transporter carbon starvation (CstA) (TC 2.A.114) family.

The protein resides in the cell membrane. This is an uncharacterized protein from Haemophilus influenzae (strain ATCC 51907 / DSM 11121 / KW20 / Rd).